A 715-amino-acid polypeptide reads, in one-letter code: Fatty acid oxidation complex subunit alpha (715 aa).

Residues 1 to 189 (MIYQGETLTV…KVGAIDAVVA (189 aa)) are enoyl-CoA hydratase/isomerase. Substrate is bound at residue Asp-296. The segment at 311–715 (AKATSHAAVL…EMAAQGKTFY (405 aa)) is 3-hydroxyacyl-CoA dehydrogenase. NAD(+)-binding positions include Met-325, Asp-344, 401 to 403 (VVE), Lys-408, and Ser-430. The For 3-hydroxyacyl-CoA dehydrogenase activity role is filled by His-451. Asn-454 contributes to the NAD(+) binding site. Substrate contacts are provided by Asn-501 and Tyr-661.

It in the N-terminal section; belongs to the enoyl-CoA hydratase/isomerase family. In the C-terminal section; belongs to the 3-hydroxyacyl-CoA dehydrogenase family. As to quaternary structure, heterotetramer of two alpha chains (FadB) and two beta chains (FadA).

The enzyme catalyses a (3S)-3-hydroxyacyl-CoA + NAD(+) = a 3-oxoacyl-CoA + NADH + H(+). The catalysed reaction is a (3S)-3-hydroxyacyl-CoA = a (2E)-enoyl-CoA + H2O. It catalyses the reaction a 4-saturated-(3S)-3-hydroxyacyl-CoA = a (3E)-enoyl-CoA + H2O. It carries out the reaction (3S)-3-hydroxybutanoyl-CoA = (3R)-3-hydroxybutanoyl-CoA. The enzyme catalyses a (3Z)-enoyl-CoA = a 4-saturated (2E)-enoyl-CoA. The catalysed reaction is a (3E)-enoyl-CoA = a 4-saturated (2E)-enoyl-CoA. It participates in lipid metabolism; fatty acid beta-oxidation. In terms of biological role, involved in the aerobic and anaerobic degradation of long-chain fatty acids via beta-oxidation cycle. Catalyzes the formation of 3-oxoacyl-CoA from enoyl-CoA via L-3-hydroxyacyl-CoA. It can also use D-3-hydroxyacyl-CoA and cis-3-enoyl-CoA as substrate. This chain is Fatty acid oxidation complex subunit alpha, found in Aeromonas hydrophila subsp. hydrophila (strain ATCC 7966 / DSM 30187 / BCRC 13018 / CCUG 14551 / JCM 1027 / KCTC 2358 / NCIMB 9240 / NCTC 8049).